The following is a 177-amino-acid chain: F(420)H(2) dehydrogenase subunit I (177 aa).

The tract at residues 1-21 (MGCPEVQDRPGSGYELEETPA) is disordered. 4Fe-4S ferredoxin-type domains are found at residues 76-105 (GLQT…IVKA) and 116-145 (WFPQ…SGKE). Positions 85, 88, 91, 95, 125, 128, 131, and 135 each coordinate [4Fe-4S] cluster.

Belongs to the complex I 23 kDa subunit family. As to quaternary structure, the FPO complex is composed of at least 13 different subunits. Requires [4Fe-4S] cluster as cofactor.

The catalysed reaction is methanophenazine + reduced coenzyme F420-(gamma-L-Glu)(n) = dihydromethanophenazine + oxidized coenzyme F420-(gamma-L-Glu)(n) + H(+). Its function is as follows. Component of the F(420)H(2) dehydrogenase (FPO complex) which is part of the energy-conserving F(420)H(2):heterodisulfide oxidoreductase system. The membrane-bound electron transfer system of the complex plays an important role in the metabolism of methylotrophic methanogens when the organisms grow on methanol or methylamines. Catalyzes the oxidation of methanophenazine to dihydromethanophenazine. It shuttles electrons from F(420)H(2), via FAD and iron-sulfur (Fe-S) centers, to methanophenazine (an electron carrier in the membrane). It couples the redox reaction to proton translocation (for every two electrons transferred, two hydrogen ions are translocated across the cytoplasmic membrane), and thus conserves the redox energy in a proton gradient. It also catalyzes the oxidation of F(420)H(2) with quinones such as 2,3-dimethyl-1,4-naphthoquinone, 2-methyl-1,4-naphthoquinone and tetramethyl-p-benzoquinone. The chain is F(420)H(2) dehydrogenase subunit I (fpoI) from Methanosarcina mazei (strain ATCC BAA-159 / DSM 3647 / Goe1 / Go1 / JCM 11833 / OCM 88) (Methanosarcina frisia).